We begin with the raw amino-acid sequence, 155 residues long: MAPK regulated corepressor interacting protein 2 (155 aa).

Residue M1 is modified to N-acetylmethionine. Positions 1–59 (MYTITKGPSKLVAQRRTGPTQQQVESRLGELLKCRHSAPTPQHPRAQPPGPWPLSSPGP) are disordered. R35 carries the omega-N-methylarginine modification. Residues 46–56 (AQPPGPWPLSS) are compositionally biased toward pro residues. At S56 the chain carries Phosphoserine. At R60 the chain carries Omega-N-methylarginine. At S77 the chain carries Phosphoserine.

It belongs to the MCRIP family. As to quaternary structure, interacts with DDX6. Interacts with MCRIP1.

It localises to the cytoplasm. The protein resides in the stress granule. The protein localises to the nucleus. The chain is MAPK regulated corepressor interacting protein 2 (MCRIP2) from Bos taurus (Bovine).